The following is a 757-amino-acid chain: Polyribonucleotide nucleotidyltransferase (757 aa).

2 residues coordinate Mg(2+): Asp-488 and Asp-494. In terms of domain architecture, KH spans 555 to 614 (PKLYTMKINAEKIRDVIGKGGAVIRALTEETGCQINIEEDGTITIAATDAAKADIAKRRI). An S1 motif domain is found at 624–692 (GKIYEGPVTK…ERGRVKLSMK (69 aa)). The segment at 693 to 757 (VLAERPAPGS…ADTGSGQRVG (65 aa)) is disordered. The segment covering 720–736 (ALAEREPRREMRDHGHP) has biased composition (basic and acidic residues). Low complexity predominate over residues 737–747 (PSEQQQQQSPP).

The protein belongs to the polyribonucleotide nucleotidyltransferase family. The cofactor is Mg(2+).

The protein localises to the cytoplasm. It catalyses the reaction RNA(n+1) + phosphate = RNA(n) + a ribonucleoside 5'-diphosphate. In terms of biological role, involved in mRNA degradation. Catalyzes the phosphorolysis of single-stranded polyribonucleotides processively in the 3'- to 5'-direction. The protein is Polyribonucleotide nucleotidyltransferase of Verminephrobacter eiseniae (strain EF01-2).